Here is a 251-residue protein sequence, read N- to C-terminus: Isoprenyl transferase (251 aa).

Asp31 is an active-site residue. Residue Asp31 coordinates Mg(2+). Residues 32–35, Trp36, Arg44, His48, and 76–78 each bind substrate; these read GNGR and STE. Asn79 acts as the Proton acceptor in catalysis. Substrate contacts are provided by residues Trp80, Arg82, Arg199, and 205 to 207; that span reads RIS. Glu218 contributes to the Mg(2+) binding site.

Belongs to the UPP synthase family. As to quaternary structure, homodimer. Mg(2+) is required as a cofactor.

In terms of biological role, catalyzes the condensation of isopentenyl diphosphate (IPP) with allylic pyrophosphates generating different type of terpenoids. The sequence is that of Isoprenyl transferase from Thermosynechococcus vestitus (strain NIES-2133 / IAM M-273 / BP-1).